Consider the following 759-residue polypeptide: TY1 enhancer activator (759 aa).

The interval 1–61 (MTAPLWPNKN…GTGANTLTNG (61 aa)) is disordered. A Phosphothreonine modification is found at threonine 22. Over residues 30 to 51 (SSTNASSNEENSRSSSAANVRS) the composition is skewed to low complexity. The segment at residues 70–96 (CTNCRNRRKKCDLGFPCGNCSRLELVC) is a DNA-binding region (zn(2)-C6 fungal-type). The segment at 229 to 254 (LTPQGEKKKKPLVKGSLYPEGPVSYK) is disordered. Residues 744 to 752 (DDLIRELFG) carry the 9aaTAD motif. Threonine 755 carries the post-translational modification Phosphothreonine.

It localises to the nucleus. Its function is as follows. TY1 element enhancer binding protein. Binds to the DNA sequence 5'-TCGGTGGTATTATTCCGA-3'. This is TY1 enhancer activator (TEA1) from Saccharomyces cerevisiae (strain ATCC 204508 / S288c) (Baker's yeast).